We begin with the raw amino-acid sequence, 309 residues long: Ferredoxin--NADP reductase (309 aa).

Residues aspartate 25, glutamine 33, tyrosine 38, valine 77, phenylalanine 107, aspartate 267, and threonine 307 each coordinate FAD.

The protein belongs to the ferredoxin--NADP reductase type 2 family. In terms of assembly, homodimer. FAD serves as cofactor.

It carries out the reaction 2 reduced [2Fe-2S]-[ferredoxin] + NADP(+) + H(+) = 2 oxidized [2Fe-2S]-[ferredoxin] + NADPH. This chain is Ferredoxin--NADP reductase, found in Lactobacillus acidophilus (strain ATCC 700396 / NCK56 / N2 / NCFM).